A 462-amino-acid polypeptide reads, in one-letter code: Asparagine--tRNA ligase (462 aa).

The protein belongs to the class-II aminoacyl-tRNA synthetase family. As to quaternary structure, homodimer.

Its subcellular location is the cytoplasm. It carries out the reaction tRNA(Asn) + L-asparagine + ATP = L-asparaginyl-tRNA(Asn) + AMP + diphosphate + H(+). The polypeptide is Asparagine--tRNA ligase (Borreliella afzelii (strain PKo) (Borrelia afzelii)).